Consider the following 95-residue polypeptide: Large ribosomal subunit protein eL30 (95 aa).

This sequence belongs to the eukaryotic ribosomal protein eL30 family.

In Methanospirillum hungatei JF-1 (strain ATCC 27890 / DSM 864 / NBRC 100397 / JF-1), this protein is Large ribosomal subunit protein eL30.